A 107-amino-acid polypeptide reads, in one-letter code: Flagellar transcriptional regulator FlhD (107 aa).

This sequence belongs to the FlhD family. As to quaternary structure, homodimer; disulfide-linked. Forms a heterohexamer composed of two FlhC and four FlhD subunits. Each FlhC binds a FlhD dimer, forming a heterotrimer, and a hexamer assembles by dimerization of two heterotrimers.

Its subcellular location is the cytoplasm. Its function is as follows. Functions in complex with FlhC as a master transcriptional regulator that regulates transcription of several flagellar and non-flagellar operons by binding to their promoter region. Activates expression of class 2 flagellar genes, including fliA, which is a flagellum-specific sigma factor that turns on the class 3 genes. Also regulates genes whose products function in a variety of physiological pathways. The chain is Flagellar transcriptional regulator FlhD from Bordetella avium (strain 197N).